We begin with the raw amino-acid sequence, 647 residues long: Zinc finger CCCH domain-containing protein 19 (647 aa).

C3H1-type zinc fingers lie at residues 16-45 (RRRS…HSDA) and 47-73 (RMNP…HPPL). The segment at 78-106 (GAPTTPRTSQQSAPQVSVPAQAPVPNPAS) is disordered. Low complexity predominate over residues 86-106 (SQQSAPQVSVPAQAPVPNPAS). The C3H1-type 3 zinc-finger motif lies at 109 to 136 (AKQGVPCYYFQKGMCVKGDRCAFLHLPQ). 5 disordered regions span residues 155-280 (VPHP…RTNG), 308-327 (LSES…DSSD), 335-452 (QRRL…DAES), 512-580 (LKRK…LSPA), and 586-605 (EAAD…ETAE). Polar residues-rich tracts occupy residues 160–175 (LKNS…QQNA) and 189–203 (NGKT…NRAG). Basic and acidic residues predominate over residues 267–280 (SLREDRGAYRRTNG). The segment covering 347 to 359 (SDRHNVYPEDERH) has biased composition (basic and acidic residues). Positions 369–379 (QASNDGVSSSR) are enriched in polar residues. Residues 419–433 (LRGKLHDRLKAKPNE) show a composition bias toward basic and acidic residues. Polar residues predominate over residues 435–445 (VSGNVQSSLSK). Residues 527-536 (GSKREEHSGG) show a composition bias toward basic and acidic residues.

In Oryza sativa subsp. japonica (Rice), this protein is Zinc finger CCCH domain-containing protein 19.